The following is a 306-amino-acid chain: Polyisoprenyl-teichoic acid--peptidoglycan teichoic acid transferase TagU (306 aa).

Over 1–11 the chain is Cytoplasmic; it reads MRAEKRKKKKK. The chain crosses the membrane as a helical; Signal-anchor for type II membrane protein span at residues 12–32; that stretch reads ILYTIIALIGIFVLSTGSYAY. Over 33-306 the chain is Extracellular; it reads YLWHKAASTV…TAELKESLNK (274 aa).

Belongs to the LytR/CpsA/Psr (LCP) family.

It is found in the cell membrane. It functions in the pathway cell wall biogenesis. Its function is as follows. May catalyze the final step in cell wall teichoic acid biosynthesis, the transfer of the anionic cell wall polymers (APs) from their lipid-linked precursor to the cell wall peptidoglycan (PG). In Bacillus licheniformis (strain ATCC 14580 / DSM 13 / JCM 2505 / CCUG 7422 / NBRC 12200 / NCIMB 9375 / NCTC 10341 / NRRL NRS-1264 / Gibson 46), this protein is Polyisoprenyl-teichoic acid--peptidoglycan teichoic acid transferase TagU.